The primary structure comprises 208 residues: Ribonuclease HII (208 aa).

The RNase H type-2 domain maps to 5–198; it reads PLIAGVDEVG…CQPRLEHDCR (194 aa). Residues Asp11, Glu12, and Asp106 each coordinate a divalent metal cation.

Belongs to the RNase HII family. Mn(2+) serves as cofactor. The cofactor is Mg(2+).

Its subcellular location is the cytoplasm. It catalyses the reaction Endonucleolytic cleavage to 5'-phosphomonoester.. Functionally, endonuclease that specifically degrades the RNA of RNA-DNA hybrids. The polypeptide is Ribonuclease HII (Microcystis aeruginosa (strain NIES-843 / IAM M-2473)).